The sequence spans 137 residues: Holo-[acyl-carrier-protein] synthase (137 aa).

Mg(2+) contacts are provided by Asp8 and Glu57.

Belongs to the P-Pant transferase superfamily. AcpS family. It depends on Mg(2+) as a cofactor.

The protein localises to the cytoplasm. The catalysed reaction is apo-[ACP] + CoA = holo-[ACP] + adenosine 3',5'-bisphosphate + H(+). Transfers the 4'-phosphopantetheine moiety from coenzyme A to a Ser of acyl-carrier-protein. This chain is Holo-[acyl-carrier-protein] synthase, found in Mesorhizobium japonicum (strain LMG 29417 / CECT 9101 / MAFF 303099) (Mesorhizobium loti (strain MAFF 303099)).